Here is a 286-residue protein sequence, read N- to C-terminus: Large ribosomal subunit protein uL2 (286 aa).

2 disordered regions span residues 22 to 59 (KELT…GGGH) and 215 to 286 (LGRR…KLHK). The segment covering 230–240 (DHPHGGGEGRT) has biased composition (basic and acidic residues). Residues 255–286 (KGGRTRQKRKPSNSSIVRRRKSRRYGQLKLHK) show a composition bias toward basic residues.

The protein belongs to the universal ribosomal protein uL2 family. In terms of assembly, part of the 50S ribosomal subunit. Forms a bridge to the 30S subunit in the 70S ribosome.

Functionally, one of the primary rRNA binding proteins. Required for association of the 30S and 50S subunits to form the 70S ribosome, for tRNA binding and peptide bond formation. It has been suggested to have peptidyltransferase activity; this is somewhat controversial. Makes several contacts with the 16S rRNA in the 70S ribosome. In Rhodopirellula baltica (strain DSM 10527 / NCIMB 13988 / SH1), this protein is Large ribosomal subunit protein uL2.